An 824-amino-acid chain; its full sequence is Type IV secretion system protein PtlC (824 aa).

ATP is bound at residue 456 to 463 (GQSGSGKT).

It belongs to the TrbE/VirB4 family.

It localises to the cell membrane. Functionally, component of the type IV secretion system ptl essential for secretion of assembled pertussis toxin (PTX) through the outer membrane. The sequence is that of Type IV secretion system protein PtlC (ptlC) from Bordetella pertussis (strain Tohama I / ATCC BAA-589 / NCTC 13251).